A 333-amino-acid chain; its full sequence is MDDKGGYRQINSAFNACAFDDILGSQMAQLPELPDVEQLTPRVLRILGQNPGKFTFQGTNTYVIGTGRQRLIIDTGGGEADWASLINDTLKARGITIARVLLTHWHGDHTGGVADLIRLYPDLEHHIYKNQPDRGQQNIYHAQTFDVEGATVRALHTPGHSEDHMCFILEEEGEPRAMFTGDTILGHGTSTMEDLSSFMDSLQNITDQQCEVGYSAHGAVIENLPLKMVQELRHKTRREAQVLTALASYASRGQRSLTTSELVAEIYGQSLNAETRAFALEPFIDQVLRKLAGDGKVGFEVRAGQRKWFIMDMMQGSIRPARSGSAREILVAA.

Zn(2+) contacts are provided by His-104, His-106, Asp-108, and His-109. The active-site Proton donor/acceptor is the Asp-108.

Belongs to the metallo-beta-lactamase superfamily. It depends on Zn(2+) as a cofactor.

It carries out the reaction atrochrysone carboxyl-[ACP] + H2O = atrochrysone carboxylate + holo-[ACP] + H(+). The protein operates within pigment biosynthesis. Atrochrysone carboxyl ACP thioesterase; part of the gene cluster that mediates the biosynthesis of the bianthraquinone cladofulvin, a conidial pigment not required for virulence but that plays a role in fitness and resistance to environmental stresses including UV light and low-temperature stress. The pathway begins with the synthesis of atrochrysone thioester by the polyketide synthase (PKS) claG. The atrochrysone carboxyl ACP thioesterase claF then breaks the thioester bond and releases the atrochrysone carboxylic acid from claG. This compound is decarboxylated by claH to yield emodin, which is further converted to chrysophanol hydroquinone by the reductase claC and the dehydratase claB. The cytochrome P450 monooxygenase claM then catalyzes the dimerization of nataloe-emodin to cladofulvin. The chain is Atrochrysone carboxyl ACP thioesterase from Passalora fulva (Tomato leaf mold).